The following is a 258-amino-acid chain: Tryptophan synthase alpha chain (258 aa).

Catalysis depends on proton acceptor residues glutamate 47 and aspartate 58.

This sequence belongs to the TrpA family. As to quaternary structure, tetramer of two alpha and two beta chains.

It catalyses the reaction (1S,2R)-1-C-(indol-3-yl)glycerol 3-phosphate + L-serine = D-glyceraldehyde 3-phosphate + L-tryptophan + H2O. It functions in the pathway amino-acid biosynthesis; L-tryptophan biosynthesis; L-tryptophan from chorismate: step 5/5. The alpha subunit is responsible for the aldol cleavage of indoleglycerol phosphate to indole and glyceraldehyde 3-phosphate. This chain is Tryptophan synthase alpha chain, found in Bacillus thuringiensis subsp. konkukian (strain 97-27).